An 85-amino-acid polypeptide reads, in one-letter code: Conotoxin Lt28.4 (85 aa).

Positions 1 to 21 (MPKLEMMLLVLLILPLCYIDA) are cleaved as a signal peptide. The propeptide occupies 22–40 (VGPPPPWNMEDEIIEHWQK).

Belongs to the conotoxin D superfamily. In terms of processing, contains 5 disulfide bonds. Expressed by the venom duct.

The protein localises to the secreted. Probable neurotoxin. The protein is Conotoxin Lt28.4 of Conus litteratus (Lettered cone).